The primary structure comprises 365 residues: Putative glutamate--cysteine ligase 2-2 (365 aa).

Belongs to the glutamate--cysteine ligase type 2 family. YbdK subfamily.

The catalysed reaction is L-cysteine + L-glutamate + ATP = gamma-L-glutamyl-L-cysteine + ADP + phosphate + H(+). In terms of biological role, ATP-dependent carboxylate-amine ligase which exhibits weak glutamate--cysteine ligase activity. The polypeptide is Putative glutamate--cysteine ligase 2-2 (Mycolicibacterium vanbaalenii (strain DSM 7251 / JCM 13017 / BCRC 16820 / KCTC 9966 / NRRL B-24157 / PYR-1) (Mycobacterium vanbaalenii)).